Here is a 305-residue protein sequence, read N- to C-terminus: MTLYIRRESSKLWKRFCSEISTEIGLLAENWKYLLAGLICQYIHGLAAKGVHYIHRPGPTLQDLGFFLLPELGQERSYISETVFTSVFLSFFLWTFHPFILKTKKIYTVLIWCRVLAFLVACQFLRVITFYSTQLPGPNYHCREGSKVSRLPWPKSALEVLEINPHGVMYGCGDLIFSSHMIFTLVFVRTYQKYGTKRFIKLFGWLTAIVQSLLIIASRKHYSVDVVVAWYTVNLVVFCLDKKLPELPDRTAVLLPVISKDRTKEENHKLLNGNGVDPADWRPRAQVNGKIDSNGVHTDNTMNGA.

The next 6 helical transmembrane spans lie at 34–54 (LLAG…VHYI), 81–101 (ETVF…PFIL), 105–125 (KIYT…CQFL), 168–188 (VMYG…LVFV), 198–218 (RFIK…IIAS), and 221–241 (HYSV…FCLD). His180 is a catalytic residue. Residues His221 and Asp225 contribute to the active site.

Belongs to the sphingomyelin synthase family. Expressed in leaves, roots, stems, flowers and siliques.

It is found in the golgi apparatus. It localises to the trans-Golgi network membrane. The enzyme catalyses an N-(2R-hydroxy-very-long-chain fatty acyl)-(R)-4-hydroxysphingoid base + a 1,2-diacyl-sn-glycero-3-phospho-(1D-myo-inositol) = a 1D-myo-inositol-1-phospho-N-[(R)-2-hydroxy-very-long-chain fatty acyl]-(R)-4-hydroxysphingoid base + a 1,2-diacyl-sn-glycerol. It participates in sphingolipid metabolism. Functionally, catalyzes the transfer of the phosphorylinositol group from phosphatidylinositol (PI) to phytoceramide, an essential step in sphingolipid biosynthesis. May play an important role in modulating plant programmed cell death (PCD) associated with defense (e.g. toward Golovinomyces cichoracearum) by promoting sphingolipid metabolism and thus regulating ceramide accumulation. This chain is Phosphatidylinositol:ceramide inositolphosphotransferase 2, found in Arabidopsis thaliana (Mouse-ear cress).